Consider the following 365-residue polypeptide: 2-aminoethylphosphonate--pyruvate transaminase (365 aa).

At K194 the chain carries N6-(pyridoxal phosphate)lysine.

Belongs to the class-V pyridoxal-phosphate-dependent aminotransferase family. PhnW subfamily. In terms of assembly, homodimer. Pyridoxal 5'-phosphate is required as a cofactor.

It carries out the reaction (2-aminoethyl)phosphonate + pyruvate = phosphonoacetaldehyde + L-alanine. Functionally, involved in phosphonate degradation. In Bacillus cytotoxicus (strain DSM 22905 / CIP 110041 / 391-98 / NVH 391-98), this protein is 2-aminoethylphosphonate--pyruvate transaminase.